A 610-amino-acid polypeptide reads, in one-letter code: V-type proton ATPase catalytic subunit A (610 aa).

An ATP-binding site is contributed by 245-252 (GAFGCGKT).

This sequence belongs to the ATPase alpha/beta chains family. As to quaternary structure, V-ATPase is a heteromultimeric enzyme composed of a peripheral catalytic V1 complex (main components: subunits A, B, C, D, E, and F) attached to an integral membrane V0 proton pore complex (main component: the proteolipid protein).

It catalyses the reaction ATP + H2O + 4 H(+)(in) = ADP + phosphate + 5 H(+)(out). Catalytic subunit of the peripheral V1 complex of vacuolar ATPase. V-ATPase vacuolar ATPase is responsible for acidifying a variety of intracellular compartments in eukaryotic cells. The sequence is that of V-type proton ATPase catalytic subunit A from Trypanosoma congolense.